A 614-amino-acid chain; its full sequence is Acetylcholinesterase (614 aa).

Residues 1–31 form the signal peptide; sequence MRPPQCLLHTPSLASPLLLLLLWLLGGGVGA. Cys100 and Cys127 are disulfide-bonded. Position 117 (Trp117) interacts with galanthamine. A huperzine A-binding site is contributed by Trp117. Gly153 is a huprine W binding site. Tyr164 contributes to the huperzine A binding site. 233 to 234 provides a ligand contact to galanthamine; the sequence is ES. Ser234 contacts huprine W. Residue Ser234 is the Acyl-ester intermediate of the active site. An intrachain disulfide couples Cys288 to Cys303. N-linked (GlcNAc...) asparagine glycosylation occurs at Asn296. Glu365 serves as the catalytic Charge relay system. Tyr368 contacts galanthamine. Tyr368 is a huperzine A binding site. Residue Asn381 is glycosylated (N-linked (GlcNAc...) asparagine). Cys440 and Cys560 are disulfide-bonded. 2 residues coordinate huprine W: Trp470 and His478. Residue His478 is the Charge relay system of the active site. N-linked (GlcNAc...) asparagine glycosylation occurs at Asn495. Phe588 carries the GPI-anchor amidated glycine lipid modification.

The protein belongs to the type-B carboxylesterase/lipase family. In terms of assembly, interacts with PRIMA1. The interaction with PRIMA1 is required to anchor it to the basal lamina of cells and organize into tetramers. Isoform H generates GPI-anchored dimers; disulfide linked. Isoform T generates multiple structures, ranging from monomers and dimers to collagen-tailed and hydrophobic-tailed forms, in which catalytic tetramers are associated with anchoring proteins that attach them to the basal lamina or to cell membranes. In the collagen-tailed forms, isoform T subunits are associated with a specific collagen, COLQ, which triggers the formation of isoform T tetramers, from monomers and dimers. Isoform R may be monomeric. In terms of tissue distribution, isoform H is highly expressed in erythrocytes.

The protein localises to the synapse. Its subcellular location is the secreted. The protein resides in the cell membrane. It localises to the nucleus. It catalyses the reaction acetylcholine + H2O = choline + acetate + H(+). In terms of biological role, hydrolyzes rapidly the acetylcholine neurotransmitter released into the synaptic cleft allowing to terminate the signal transduction at the neuromuscular junction. Role in neuronal apoptosis. The polypeptide is Acetylcholinesterase (Homo sapiens (Human)).